We begin with the raw amino-acid sequence, 328 residues long: Malate dehydrogenase (328 aa).

Residue 12-18 (GAAGQIG) participates in NAD(+) binding. Positions 95 and 101 each coordinate substrate. NAD(+)-binding positions include Asn108, Gln115, and 132 to 134 (VGN). Substrate-binding residues include Asn134 and Arg165. His190 serves as the catalytic Proton acceptor.

This sequence belongs to the LDH/MDH superfamily. MDH type 2 family.

The enzyme catalyses (S)-malate + NAD(+) = oxaloacetate + NADH + H(+). Catalyzes the reversible oxidation of malate to oxaloacetate. This chain is Malate dehydrogenase, found in Acidovorax ebreus (strain TPSY) (Diaphorobacter sp. (strain TPSY)).